A 217-amino-acid chain; its full sequence is Probable GTP-binding protein EngB (217 aa).

Residues 27 to 201 enclose the EngB-type G domain; sequence TGIEVAFAGR…RDKLDTWFSE (175 aa). GTP-binding positions include 35 to 42, 62 to 66, 80 to 83, 147 to 150, and 180 to 182; these read GRSNAGKS, GRTQL, DLPG, TKAD, and FSS. The Mg(2+) site is built by Ser42 and Thr64.

This sequence belongs to the TRAFAC class TrmE-Era-EngA-EngB-Septin-like GTPase superfamily. EngB GTPase family. It depends on Mg(2+) as a cofactor.

Its function is as follows. Necessary for normal cell division and for the maintenance of normal septation. This chain is Probable GTP-binding protein EngB, found in Edwardsiella ictaluri (strain 93-146).